A 458-amino-acid chain; its full sequence is UDP-N-acetylmuramoylalanine--D-glutamate ligase (458 aa).

124–130 (GSDGKTT) provides a ligand contact to ATP.

Belongs to the MurCDEF family.

The protein resides in the cytoplasm. It catalyses the reaction UDP-N-acetyl-alpha-D-muramoyl-L-alanine + D-glutamate + ATP = UDP-N-acetyl-alpha-D-muramoyl-L-alanyl-D-glutamate + ADP + phosphate + H(+). It functions in the pathway cell wall biogenesis; peptidoglycan biosynthesis. Functionally, cell wall formation. Catalyzes the addition of glutamate to the nucleotide precursor UDP-N-acetylmuramoyl-L-alanine (UMA). The sequence is that of UDP-N-acetylmuramoylalanine--D-glutamate ligase from Clostridium botulinum (strain Okra / Type B1).